The chain runs to 130 residues: Small ribosomal subunit protein uS8z/uS8w (130 aa).

The protein belongs to the universal ribosomal protein uS8 family.

It is found in the cytoplasm. This chain is Small ribosomal subunit protein uS8z/uS8w (RPS15AA), found in Arabidopsis thaliana (Mouse-ear cress).